The chain runs to 718 residues: MQKFTFFVSCAKGIELLLKDELERLGISSQEKLAGVEFEGSIKDAYKVCIYSYLASQVMLKVATDKVINQQDLYEFISSINWMDYFAVDKTFKIIISGKHYDFNNTMFVSQKTKDAIVDQFRNVTNQRPNIDTENPDNVIKLHLHKQFVNVFLCLNIDSLHKRSYRQFQGQAPLKESLAAAILIKAGWLEELKKHQPILIDPMCGSGTILIEAALMAKNIAPVLLNKEFKIFNSKFHNKELWDNLLEIAKNSQKVTNAIICGFDIDNNVLDKAQRNIYQAGVEDVVTVKRQDIRDLENEFESEGLIVTNPPYGERLYGDQLDELLDIFNGFGDRLSQDFYGWKVAVLTSFADSIKEMQLRTTKRNKFYNGAIETILYQFEINEHAKFKHETQLEKNIRIAEASVQKSDEHIDFANKLKKNLKSLKPWLKQTGLECYRLYDADIPTFAVAVDVYGEHIFLQEYRADATIDQNIAKQRFYQAIYQIHKTLDIKYENIHTRVRQRQKGKEQYQKENDKNKFHIINEFDAKFYVNFDDYLDTGIFLDHRKIRQLVAKAAKNKTLLNLFSYTCTASVHAALKGAKTTSVDMSNTYLEWGKNNFELNKLDIKKHSFIQADCISWLKTNKDKFDVIFLDPPTFSNSKRMDDILDIQRDHELLINLAMDSLKKDGILYFSNNYRRFKMSPQILEKFNCENIDKICLSRDFLSNKNIHNCWEIKYKK.

The THUMP domain maps to 44 to 155 (DAYKVCIYSY…KQFVNVFLCL (112 aa)).

The protein belongs to the methyltransferase superfamily. RlmKL family.

It is found in the cytoplasm. The enzyme catalyses guanosine(2445) in 23S rRNA + S-adenosyl-L-methionine = N(2)-methylguanosine(2445) in 23S rRNA + S-adenosyl-L-homocysteine + H(+). It catalyses the reaction guanosine(2069) in 23S rRNA + S-adenosyl-L-methionine = N(2)-methylguanosine(2069) in 23S rRNA + S-adenosyl-L-homocysteine + H(+). In terms of biological role, specifically methylates the guanine in position 2445 (m2G2445) and the guanine in position 2069 (m7G2069) of 23S rRNA. This is Ribosomal RNA large subunit methyltransferase K/L from Francisella tularensis subsp. novicida (strain U112).